Reading from the N-terminus, the 309-residue chain is HTH-type transcriptional activator AaeR (309 aa).

One can recognise an HTH lysR-type domain in the interval methionine 1–threonine 59. Positions phenylalanine 19–serine 38 form a DNA-binding region, H-T-H motif.

This sequence belongs to the LysR transcriptional regulatory family.

Its activity is regulated as follows. Activity is regulated by p-hydroxybenzoic acid. Transcriptional regulator that activates expression of the aaeXAB operon, which is involved in the efflux of aromatic carboxylic acids such as p-hydroxybenzoic acid (pHBA). In the presence of the effector pHBA, acts by binding to a single target within the aaeXAB-aaeR intergenic region. In the absence of pHBA, binds more than 50 sites along the E.coli K12 genome, including genes related to biofilm formation and several genes involved in stress response, suggesting that it might play a role in quorum sensing in the absence of pHBA. The sequence is that of HTH-type transcriptional activator AaeR from Escherichia coli (strain K12).